We begin with the raw amino-acid sequence, 447 residues long: GTPase Der (447 aa).

EngA-type G domains are found at residues 3-167 (PVIA…VQER) and 181-354 (VKIA…AAAM). Residues 9–16 (GRPNVGKS), 56–60 (DTGGF), 119–122 (NKAE), 187–194 (GRPNVGKS), 234–238 (DTAGL), and 299–302 (NKWD) each bind GTP. The 85-residue stretch at 355-439 (VKLPTPQLTR…PLRIEFRTNK (85 aa)) folds into the KH-like domain.

Belongs to the TRAFAC class TrmE-Era-EngA-EngB-Septin-like GTPase superfamily. EngA (Der) GTPase family. As to quaternary structure, associates with the 50S ribosomal subunit.

In terms of biological role, GTPase that plays an essential role in the late steps of ribosome biogenesis. This chain is GTPase Der, found in Cupriavidus taiwanensis (strain DSM 17343 / BCRC 17206 / CCUG 44338 / CIP 107171 / LMG 19424 / R1) (Ralstonia taiwanensis (strain LMG 19424)).